The primary structure comprises 95 residues: Feather keratin B-4 (95 aa).

S1 is modified (N-acetylserine).

It belongs to the avian keratin family. In terms of assembly, the avian keratins (F-ker, S-ker, C-ker and B-ker) are a complex mixture of very similar polypeptides.

The sequence is that of Feather keratin B-4 from Columba livia (Rock dove).